Consider the following 245-residue polypeptide: tRNA (guanine-N(1)-)-methyltransferase (245 aa).

Residues Gly-111 and 131–136 (MGDYVL) each bind S-adenosyl-L-methionine.

It belongs to the RNA methyltransferase TrmD family. As to quaternary structure, homodimer.

The protein localises to the cytoplasm. It catalyses the reaction guanosine(37) in tRNA + S-adenosyl-L-methionine = N(1)-methylguanosine(37) in tRNA + S-adenosyl-L-homocysteine + H(+). In terms of biological role, specifically methylates guanosine-37 in various tRNAs. This is tRNA (guanine-N(1)-)-methyltransferase from Staphylococcus epidermidis (strain ATCC 12228 / FDA PCI 1200).